Reading from the N-terminus, the 229-residue chain is 2,3-bisphosphoglycerate-dependent phosphoglycerate mutase (229 aa).

Substrate-binding positions include 8 to 15 (RHGESAWN), 21 to 22 (TG), Arg-60, 87 to 90 (ERHY), Lys-98, 114 to 115 (RR), and 183 to 184 (GN). Catalysis depends on His-9, which acts as the Tele-phosphohistidine intermediate. Glu-87 (proton donor/acceptor) is an active-site residue.

Belongs to the phosphoglycerate mutase family. BPG-dependent PGAM subfamily. Homodimer.

It catalyses the reaction (2R)-2-phosphoglycerate = (2R)-3-phosphoglycerate. It participates in carbohydrate degradation; glycolysis; pyruvate from D-glyceraldehyde 3-phosphate: step 3/5. Catalyzes the interconversion of 2-phosphoglycerate and 3-phosphoglycerate. This Polynucleobacter asymbioticus (strain DSM 18221 / CIP 109841 / QLW-P1DMWA-1) (Polynucleobacter necessarius subsp. asymbioticus) protein is 2,3-bisphosphoglycerate-dependent phosphoglycerate mutase.